A 39-amino-acid chain; its full sequence is Natriuretic peptide CnNP-a (39 aa).

A propeptide spanning residues 1-8 (SGSKTAKI) is cleaved from the precursor. Cysteine 12 and cysteine 28 form a disulfide bridge.

This sequence belongs to the natriuretic peptide family. Expressed by the venom gland.

The protein resides in the secreted. Snake venom natriuretic peptide that targets both NPR1 and NPR2. Exhibits hypotensive and vasodepressor activities. The sequence is that of Natriuretic peptide CnNP-a from Cryptophis nigrescens (Eastern small-eyed snake).